The primary structure comprises 146 residues: Large ribosomal subunit protein uL15 (146 aa).

Residues 1 to 62 (MRLHELRPKT…GQMPLQERLP (62 aa)) are disordered. Residues 10–21 (TNYKKSRKRKGR) are compositionally biased toward basic residues. Positions 42-52 (TGGGVRPGFEG) are enriched in gly residues.

This sequence belongs to the universal ribosomal protein uL15 family. Part of the 50S ribosomal subunit.

Functionally, binds to the 23S rRNA. In Natranaerobius thermophilus (strain ATCC BAA-1301 / DSM 18059 / JW/NM-WN-LF), this protein is Large ribosomal subunit protein uL15.